A 207-amino-acid polypeptide reads, in one-letter code: MAEYTLPDLDWDYAALEPHISGQINEIHHTKHHATYVKGVNDALAKLEEARANEDHAAIFLNEKNLAFHLGGHVNHSIWWKNLSPDGGDKPTGELAAAIDDAFGSFDKFRAQFSAAANGLQGSGWAVLGYDTLGSRLLTFQLYDQQANVPLGIIPLLQVDMWEHAFYLQYKNVKADYVKAFWNVVNWADVQKRYAAATSKAQGLIFG.

Positions 28, 76, 160, and 164 each coordinate Mn(2+).

Belongs to the iron/manganese superoxide dismutase family. Requires Mn(2+) as cofactor.

It carries out the reaction 2 superoxide + 2 H(+) = H2O2 + O2. Its function is as follows. Destroys superoxide anion radicals which are normally produced within the cells and which are toxic to biological systems. This chain is Superoxide dismutase [Mn] (sodA), found in Mycobacterium avium.